The chain runs to 202 residues: Ion-translocating oxidoreductase complex subunit G (202 aa).

A helical membrane pass occupies residues 11–31 (AILLALIALICTALSTGIYLL). An FMN phosphoryl threonine modification is found at Thr-177.

Belongs to the RnfG family. As to quaternary structure, the complex is composed of six subunits: RnfA, RnfB, RnfC, RnfD, RnfE and RnfG. The cofactor is FMN.

It is found in the cell inner membrane. In terms of biological role, part of a membrane-bound complex that couples electron transfer with translocation of ions across the membrane. The protein is Ion-translocating oxidoreductase complex subunit G of Pasteurella multocida (strain Pm70).